Here is a 582-residue protein sequence, read N- to C-terminus: ATP-dependent lipid A-core flippase (582 aa).

5 consecutive transmembrane segments (helical) span residues Leu-16 to Leu-36, Ile-63 to Phe-83, Ile-153 to Val-173, Pro-253 to Pro-273, and Val-275 to Met-295. The 283-residue stretch at Ile-28–Arg-310 folds into the ABC transmembrane type-1 domain. The ABC transporter domain maps to Ile-342–Leu-578. Residue Gly-376–Ser-383 participates in ATP binding.

It belongs to the ABC transporter superfamily. Lipid exporter (TC 3.A.1.106) family. Homodimer.

It is found in the cell inner membrane. The catalysed reaction is ATP + H2O + lipid A-core oligosaccharideSide 1 = ADP + phosphate + lipid A-core oligosaccharideSide 2.. Involved in lipopolysaccharide (LPS) biosynthesis. Translocates lipid A-core from the inner to the outer leaflet of the inner membrane. Transmembrane domains (TMD) form a pore in the inner membrane and the ATP-binding domain (NBD) is responsible for energy generation. This Sodalis glossinidius (strain morsitans) protein is ATP-dependent lipid A-core flippase.